A 712-amino-acid chain; its full sequence is Testis-specific gene 10 protein (712 aa).

Serine 161 carries the phosphoserine modification. Residues 571–703 form an interaction with HIF1A region; the sequence is QMTNERISMQ…SPDRDLDRSL (133 aa). The disordered stretch occupies residues 673-699; sequence YHLGSMKPNTKCHSPERAHHRSPDRDL. Basic and acidic residues predominate over residues 685-699; it reads HSPERAHHRSPDRDL. Position 702 is a phosphoserine (serine 702).

This sequence belongs to the CEP135/TSGA10 family. In terms of assembly, interacts with HIF1A. In terms of processing, processed into N-terminal 27-kDa and C-terminal 55-kDa fragments. As to expression, expressed in testis, predominantly in elongated spermatids (at protein level). Detected in spermatocytes only at the mRNA, but not at the protein level.

Its subcellular location is the cytoplasm. It is found in the cytoskeleton. The protein localises to the microtubule organizing center. The protein resides in the centrosome. It localises to the centriole. Plays a role in spermatogenesis. When overexpressed, prevents nuclear localization of HIF1A. The polypeptide is Testis-specific gene 10 protein (Tsga10) (Rattus norvegicus (Rat)).